The chain runs to 146 residues: Angiogenin (146 aa).

A signal peptide spans Met1–Ala24. Pyrrolidone carboxylic acid is present on Gln25. The Proton acceptor role is filled by His37. Arg45 is a tRNA binding site. 3 disulfide bridges follow: Cys50–Cys105, Cys63–Cys116, and Cys81–Cys131. Positions Arg55 to Met59 match the Nucleolar localization signal motif. TRNA contacts are provided by Cys105 and Ile127. The Proton donor role is filled by His138.

The protein belongs to the pancreatic ribonuclease family. As to quaternary structure, homodimer. Interacts with RNH1; inhibiting ANG ribonuclease activity. Interacts with PCNA.

Its subcellular location is the secreted. The protein localises to the nucleus. It is found in the nucleolus. The protein resides in the cytoplasm. It localises to the stress granule. Its activity is regulated as follows. Has weak tRNA ribonuclease activity by itself due to partial autoinhibition by its C-terminus, which folds into a short alpha-helix that partially occludes the substrate-binding site. In absence of stress, the ribonuclease activity is inhibited by RNH1 in the cytoplasm. In response to stress, dissociates from RNH1 in the cytoplasm and associates with cytoplasmic ribosomes with vacant A-sites: ribosomes directly activate the tRNA ribonuclease activity of ANG by refolding the C-terminal alpha-helix. In response to stress, the angiogenic activity of ANG is inhibited by RNH1 in the nucleus. Secreted ribonuclease that can either promote or restrict cell proliferation of target cells, depending on the context. Endocytosed in target cells via its receptor PLXNB2 and translocates to the cytoplasm or nucleus. Under stress conditions, localizes to the cytoplasm and promotes the assembly of stress granules (SGs): specifically cleaves a subset of tRNAs within anticodon loops to produce tRNA-derived stress-induced fragments (tiRNAs), resulting in translation repression and inhibition of cell proliferation. tiRNas also prevent formation of apoptosome, thereby promoting cell survival. Preferentially cleaves RNAs between a pyrimidine and an adenosine residue, suggesting that it cleaves the anticodon loop of tRNA(Ala) (32-UUAGCAU-38) after positions 33 and 36. Cleaves a subset of tRNAs, including tRNA(Ala), tRNA(Glu), tRNA(Gly), tRNA(Lys), tRNA(Val), tRNA(His), tRNA(Asp) and tRNA(Sec). Under growth conditions and in differentiated cells, translocates to the nucleus and stimulates ribosomal RNA (rRNA) transcription, including that containing the initiation site sequences of 45S rRNA, thereby promoting cell growth and proliferation. Angiogenin induces vascularization of normal and malignant tissues via its ability to promote rRNA transcription. Involved in hematopoietic stem and progenitor cell (HSPC) growth and survival by promoting rRNA transcription in growth conditions and inhibiting translation in response to stress, respectively. Mediates the crosstalk between myeloid and intestinal epithelial cells to protect the intestinal epithelial barrier integrity: secreted by myeloid cells and promotes intestinal epithelial cells proliferation and survival. Also mediates osteoclast-endothelial cell crosstalk in growing bone: produced by osteoclasts and protects the neighboring vascular cells against senescence by promoting rRNA transcription. In Miopithecus talapoin (Angolan talapoin), this protein is Angiogenin (ANG).